Consider the following 378-residue polypeptide: Transmembrane protein adipocyte-associated 1 homolog (378 aa).

N-linked (GlcNAc...) asparagine glycosylation is found at N16, N25, and N36. Helical transmembrane passes span 61–81 (VMLLIPNVAFLVFLMWKLPSA), 88–108 (TSSPIFVAFYILVFVVAAVGI), 136–156 (FFLLAIELSVIILGLAFGHLE), 164–184 (VLAITAVLSLAYSITQGTLEI), 205–225 (HFWLASSCFFFLVYSLIVILP), 247–267 (ILALLNLVQGLGSALLCADII), and 278–298 (FLYFSVFAPLIYVTFLKGFFG). Residues 316–335 (DSDVHLPHTSSSGLGRKDLD) are disordered.

This sequence belongs to the UPF0359 family.

It is found in the membrane. This chain is Transmembrane protein adipocyte-associated 1 homolog (tpra1), found in Danio rerio (Zebrafish).